The following is a 349-amino-acid chain: MRVADFSFELPDSLIARHPLAERHGSRLLVLDGPSGELAHKQFTDLLEYLRPGDLMVFNNTRVIPARLFGQKASGGKLEVLVERVLDSHRVLAHVRASKAPKEGAQILIDGGGEAEMVARHDTLFELRFSEEVLPLLERVGHMPLPPYIDRPDEGADRERYQTVYAERAGAVAAPTAGLHFDEALLEKIAAKGVERAFVTLHVGAGTFQPVRVDKIEDHTMHKEWLEVSQDVVDAVAACRARGGRVIAVGTTSVRSLESAARDGVLKAFSGDTDIFIFPGRPFHVVDCLVTNFHLPESTLLMLVSAFAGYPETMAAYAAAVEQGYRFFSYGDAMFITRNPAPRGPEDQA.

It belongs to the QueA family. Monomer.

It localises to the cytoplasm. The enzyme catalyses 7-aminomethyl-7-carbaguanosine(34) in tRNA + S-adenosyl-L-methionine = epoxyqueuosine(34) in tRNA + adenine + L-methionine + 2 H(+). It functions in the pathway tRNA modification; tRNA-queuosine biosynthesis. In terms of biological role, transfers and isomerizes the ribose moiety from AdoMet to the 7-aminomethyl group of 7-deazaguanine (preQ1-tRNA) to give epoxyqueuosine (oQ-tRNA). In Pseudomonas entomophila (strain L48), this protein is S-adenosylmethionine:tRNA ribosyltransferase-isomerase.